The primary structure comprises 340 residues: MYLARSGVFISRIRVLSILNPRFVLLSRRLNHTDSKHYFTDPKTNEIKKPPTFFQHHDSKVNASADDVAQAIAESVRAHKKRRQKVFFSAMLTGIIGVTLGFSISYKVLYKKQESFIPLVPSRKWHRLSAYDAQRVNIDEMKMLGKMRCLSVLTNHEMIREQFGIPLKTDTGEVPSVKSFEVWCEDQDPGVLGIVVRPIDATRDNDSRYHRTHGWHTIPGLFQWRMGTKPIKIRDKFDSFLKFIGVNTGDLLEVINPDREVGDFKYEYPLRKGDSFDGDDDRAMHIWFFGEIDLSQDAMVVFKGKYHVNVKLEQVDLLKKENDQLIRYVLYKNENDKKNG.

A mitochondrion-targeting transit peptide spans 1 to 30; sequence MYLARSGVFISRIRVLSILNPRFVLLSRRL. A helical transmembrane segment spans residues 86–106; the sequence is VFFSAMLTGIIGVTLGFSISY.

This sequence belongs to the AIM39 family.

Its subcellular location is the mitochondrion membrane. In Kluyveromyces lactis (strain ATCC 8585 / CBS 2359 / DSM 70799 / NBRC 1267 / NRRL Y-1140 / WM37) (Yeast), this protein is Altered inheritance of mitochondria protein 39, mitochondrial (AIM39).